The sequence spans 270 residues: Formamidopyrimidine-DNA glycosylase (270 aa).

The active-site Schiff-base intermediate with DNA is the proline 2. Residue glutamate 3 is the Proton donor of the active site. Residue lysine 58 is the Proton donor; for beta-elimination activity of the active site. Residues histidine 92, arginine 111, and arginine 153 each coordinate DNA. Residues 238 to 270 (SVYGASVCPVCGGALRQIRLAQRGTWFCPRCQR) form an FPG-type zinc finger. The Proton donor; for delta-elimination activity role is filled by arginine 260.

This sequence belongs to the FPG family. In terms of assembly, monomer. Requires Zn(2+) as cofactor.

The enzyme catalyses Hydrolysis of DNA containing ring-opened 7-methylguanine residues, releasing 2,6-diamino-4-hydroxy-5-(N-methyl)formamidopyrimidine.. The catalysed reaction is 2'-deoxyribonucleotide-(2'-deoxyribose 5'-phosphate)-2'-deoxyribonucleotide-DNA = a 3'-end 2'-deoxyribonucleotide-(2,3-dehydro-2,3-deoxyribose 5'-phosphate)-DNA + a 5'-end 5'-phospho-2'-deoxyribonucleoside-DNA + H(+). In terms of biological role, involved in base excision repair of DNA damaged by oxidation or by mutagenic agents. Acts as a DNA glycosylase that recognizes and removes damaged bases. Has a preference for oxidized purines, such as 7,8-dihydro-8-oxoguanine (8-oxoG). Has AP (apurinic/apyrimidinic) lyase activity and introduces nicks in the DNA strand. Cleaves the DNA backbone by beta-delta elimination to generate a single-strand break at the site of the removed base with both 3'- and 5'-phosphates. The chain is Formamidopyrimidine-DNA glycosylase from Halorhodospira halophila (strain DSM 244 / SL1) (Ectothiorhodospira halophila (strain DSM 244 / SL1)).